The sequence spans 329 residues: N-acetylmuramoyl-L-alanine amidase sle1 (329 aa).

A signal peptide spans 1–26 (MNKKILATAVLGTGALSTLFAHQAEA). 3 LysM domains span residues 28-71 (TTHT…VLKV), 88-131 (STYT…QLKV), and 152-195 (STYT…KLRV). A Peptidase C51 domain is found at 205 to 329 (STRSAQSTYY…YQVRNYKFIH (125 aa)).

It localises to the secreted. It is found in the cell surface. The enzyme catalyses Hydrolyzes the link between N-acetylmuramoyl residues and L-amino acid residues in certain cell-wall glycopeptides.. Functionally, peptidoglycan hydrolase involved in the splitting of the septum during cell division. In Staphylococcus haemolyticus (strain JCSC1435), this protein is N-acetylmuramoyl-L-alanine amidase sle1 (sle1).